Reading from the N-terminus, the 201-residue chain is Cysteine dioxygenase type 1 (201 aa).

Residues histidine 86, histidine 88, and histidine 141 each coordinate Fe cation. Positions 93-158 (CFLKLLQGQL…TEPAVSLHLY (66 aa)) form a cross-link, 3'-(S-cysteinyl)-tyrosine (Cys-Tyr).

The protein belongs to the cysteine dioxygenase family. As to quaternary structure, monomer. The cofactor is Fe cation. Ni(2+) is required as a cofactor. It depends on Zn(2+) as a cofactor. In terms of processing, the thioether cross-link between Cys-93 and Tyr-158 plays a structural role through stabilizing the Fe(2+) ion, and prevents the production of highly damaging free hydroxyl radicals by holding the oxygen radical via hydroxyl hydrogen.

It carries out the reaction L-cysteine + O2 = 3-sulfino-L-alanine + H(+). It participates in organosulfur biosynthesis; taurine biosynthesis; hypotaurine from L-cysteine: step 1/2. Its function is as follows. Catalyzes the oxidation of cysteine to cysteine sulfinic acid with addition of molecular dioxygen. The polypeptide is Cysteine dioxygenase type 1 (cdo1) (Danio rerio (Zebrafish)).